The following is a 236-amino-acid chain: Venom metalloproteinase antarease-like TfasMP_A (236 aa).

Positions 4 to 232 (IVVEYYIVTD…KPAASCIFEQ (229 aa)) constitute a Peptidase M12B domain. His-161 contributes to the Zn(2+) binding site. Glu-162 is a catalytic residue. The Zn(2+) site is built by His-165 and His-171.

It belongs to the venom metalloproteinase (M12B) family. Requires Zn(2+) as cofactor. Post-translationally, contains several disulfide bonds. In terms of tissue distribution, expressed by the venom gland.

It is found in the secreted. With respect to regulation, inhibited by EDTA. Acts as a metalloprotease. Penetrates intact tissue and specifically cleaves the vesicle-associated membrane protein 2 (VAMP2) (part of the SNARE complex) involved in pancreatic secretion, thus disrupting the normal vesicular traffic. The protein is Venom metalloproteinase antarease-like TfasMP_A of Tityus fasciolatus (Central Brazilian scorpion).